The primary structure comprises 239 residues: MSLMKEMLSAGVHFGHKKAFWNPQMKEYIFGINHGVHIINLEKTVPLFQDAVNFVGKTVANGGKILFVGTKRQAQDIVEAEAKRCGMPFVSHRWLGGMLTNYKTVRQSIKRLAQLEKMREDGTLESLTKKEMLQNIRTIEKLEKVLGGIKEMGGLPDAIVVIDGNKEHIAIQEAQKLGIKVVAIVDTNSNPEGIDYIIPGNDDAVKSISFYMKKFADAVIDAQGLDRAVEAKADEAAQA.

The protein belongs to the universal ribosomal protein uS2 family.

This Francisella tularensis subsp. holarctica (strain FTNF002-00 / FTA) protein is Small ribosomal subunit protein uS2.